The following is a 259-amino-acid chain: Oxidase ustYb (259 aa).

The helical transmembrane segment at 36-56 (IIYTSLAFVGFIEILFFGIFF) threads the bilayer. 2 N-linked (GlcNAc...) asparagine glycosylation sites follow: Asn102 and Asn122. 2 consecutive short sequence motifs (HXXHC) follow at residues 147 to 151 (HQLHC) and 197 to 201 (HVDHC).

It belongs to the ustYa family.

The protein localises to the membrane. The protein operates within mycotoxin biosynthesis. Functionally, oxidase; part of the gene cluster that mediates the biosynthesis of the secondary metabolite ustiloxin B, an antimitotic tetrapeptide. First, ustA is processed by the subtilisin-like endoprotease Kex2 that is outside the ustiloxin B gene cluster, at the C-terminal side of Arg-Lys, after transfer to Golgi apparatus through the endoplasmic reticulum (ER). Cleavage by KEX2 generates 16 peptides YAIG-I to YAIG-XVI. To process the precursor peptide further, at least two peptidases are necessary to cleave the N-terminal and C-terminal sides of the Tyr-Ala-Ile-Gly core peptide which serves as backbone for the synthesis of ustiloxin B, through cyclization and modification of the tyrosine with a non-protein coding amino acid, norvaline. One of the two peptidases must be the serine peptidase ustP; and the other pepdidase is probably ustH. Macrocyclization of the core peptide derived from ustA requires the tyrosinase ustQ, as well as the homologous oxidases ustYa and ustYb, and leads to the production of the first cyclization product N-desmethylustiloxin F. For the formation of N-desmethylustiloxin F, three oxidation steps are required, hydroxylation at the benzylic position, hydroxylation at either the aromatic ring of Tyr or beta-position of Ile, and oxidative cyclization. UstQ may catalyze the oxidation of a phenol moiety, whereas the ustYa and ustYb are most likely responsible for the remaining two-step oxidations. N-desmethylustiloxin F is then methylated by ustM to yield ustiloxin F which in turn substrate of the cytochrome P450 monooxygenase ustC which catalyzes the formation of S-deoxyustiloxin H. The flavoprotein monooxygenases ustF1 and ustF2 then participate in the modification of the side chain of S-deoxyustiloxin H, leading to the synthesis of an oxime intermediate, via ustiloxin H. Finally, carboxylative dehydration performed by the cysteine desulfurase-like protein ustD yields ustiloxin B. This Aspergillus flavus (strain ATCC 200026 / FGSC A1120 / IAM 13836 / NRRL 3357 / JCM 12722 / SRRC 167) protein is Oxidase ustYb.